The following is a 433-amino-acid chain: MLNIRKLSANADGFKAELEALLAWETVSNDSVNEIVKDVLKNVRERGDEALLEYTAKFDRLTLAKGSDLEIPKSELEAALKRIPKDQRDGLELSAQRVKDYHEKQVMKSWSYTEDDGTFLGQQVTCLDRVGLYVPGGKAAYPSSVIMNAIPAKVAGVPELIMVVPTPDGEVNDMVLAAAAICGVDRVFTLGGAQAVAALAYGTETVPPVDKVVGPGNIFVATAKREVFGTVGIDMIAGPSEILVYCDGKTNPDWIAMDLFSQAEHDEDAQSILVTQDAEFAEKVYLSMNKLVKTLPREEIITKAITDRGAIIVVDNEDQAIELINYIAPEHLELSIDEPKALLPKIKHAGAIFMGRFTAEALGDYCAGPNHVLPTSRTARFSSPLGVYDFQKRSSLIMCSAEGANMLGQVAGVLADGEGLQAHAASARYRVKD.

3 residues coordinate NAD(+): Y133, Q194, and N217. 3 residues coordinate substrate: S240, Q262, and H265. Residues Q262 and H265 each coordinate Zn(2+). Catalysis depends on proton acceptor residues E330 and H331. Residues H331, D364, E418, and H423 each coordinate substrate. D364 is a binding site for Zn(2+). H423 provides a ligand contact to Zn(2+).

The protein belongs to the histidinol dehydrogenase family. It depends on Zn(2+) as a cofactor.

It carries out the reaction L-histidinol + 2 NAD(+) + H2O = L-histidine + 2 NADH + 3 H(+). The protein operates within amino-acid biosynthesis; L-histidine biosynthesis; L-histidine from 5-phospho-alpha-D-ribose 1-diphosphate: step 9/9. In terms of biological role, catalyzes the sequential NAD-dependent oxidations of L-histidinol to L-histidinaldehyde and then to L-histidine. The polypeptide is Histidinol dehydrogenase (Hydrogenovibrio crunogenus (strain DSM 25203 / XCL-2) (Thiomicrospira crunogena)).